A 491-amino-acid chain; its full sequence is Probable G-protein coupled receptor Mth-like 7 (491 aa).

Positions 1–22 (MRLPWVIFCTVLLLIFTNNSNA) are cleaved as a signal peptide. Residues N18 and N42 are each glycosylated (N-linked (GlcNAc...) asparagine). Residues 23–167 (DIPGCNYYDT…EEVSIQIFNK (145 aa)) are Extracellular-facing. Disulfide bonds link C27–C80, C82–C87, and C92–C103. A helical membrane pass occupies residues 168–188 (CGLIVWFQDGKFWVTVDLFME). The Cytoplasmic portion of the chain corresponds to 189 to 222 (KQDYCLYRHNFDSDFPKSMWIIRHRCTSHISPGS). Residues 223 to 243 (LEILIITMICFVLTIAVYLYI) form a helical membrane-spanning segment. At 244 to 252 (KKLRNVTGK) the chain is on the extracellular side. A glycan (N-linked (GlcNAc...) asparagine) is linked at N248. Residues 253–273 (CIVCCIVSRFIQCLIMILDHL) form a helical membrane-spanning segment. At 274-325 (NLLNGICSPAGYSSHFFRMASNLWLSVISYHTWKVLTSLNRVDPNYRFLRYN) the chain is on the cytoplasmic side. The helical transmembrane segment at 326–346 (AFVWSTAAIMTGSIYIVNQIW) threads the bilayer. Over 347 to 372 (ENDPSKWNWLPLVGFIRCSVKDWHPS) the chain is Extracellular. A helical membrane pass occupies residues 373–393 (VWIYISGPSLALSTFNVAMFA). Residues 394–434 (LTAIYIRKVKGGINKFTNEEEGRINCINFDSQTYLQFLRLS) are Cytoplasmic-facing. A helical transmembrane segment spans residues 435-455 (IVMGLTWIFNVIPYSARLHIF). The Extracellular portion of the chain corresponds to 456–458 (WEW). Residues 459-479 (VGIISEYFHSAFGIVLFVLLV) form a helical membrane-spanning segment. Residues 480–491 (LKRSTWTLMMDS) lie on the Cytoplasmic side of the membrane.

The protein belongs to the G-protein coupled receptor 2 family. Mth subfamily.

It localises to the cell membrane. The polypeptide is Probable G-protein coupled receptor Mth-like 7 (mthl7) (Drosophila melanogaster (Fruit fly)).